The primary structure comprises 474 residues: tRNA-2-methylthio-N(6)-dimethylallyladenosine synthase (474 aa).

One can recognise an MTTase N-terminal domain in the interval 3-120 (KKLHIKTWGC…LPEMINSVRG (118 aa)). Positions 12, 49, 83, 157, 161, and 164 each coordinate [4Fe-4S] cluster. Residues 143 to 375 (RAEGPTAFVS…QERINQQAMA (233 aa)) enclose the Radical SAM core domain. The region spanning 378-441 (RRMLGTTQRI…PNSLRGKVVR (64 aa)) is the TRAM domain.

It belongs to the methylthiotransferase family. MiaB subfamily. Monomer. Requires [4Fe-4S] cluster as cofactor.

The protein localises to the cytoplasm. The catalysed reaction is N(6)-dimethylallyladenosine(37) in tRNA + (sulfur carrier)-SH + AH2 + 2 S-adenosyl-L-methionine = 2-methylsulfanyl-N(6)-dimethylallyladenosine(37) in tRNA + (sulfur carrier)-H + 5'-deoxyadenosine + L-methionine + A + S-adenosyl-L-homocysteine + 2 H(+). In terms of biological role, catalyzes the methylthiolation of N6-(dimethylallyl)adenosine (i(6)A), leading to the formation of 2-methylthio-N6-(dimethylallyl)adenosine (ms(2)i(6)A) at position 37 in tRNAs that read codons beginning with uridine. The chain is tRNA-2-methylthio-N(6)-dimethylallyladenosine synthase from Escherichia coli (strain SMS-3-5 / SECEC).